A 408-amino-acid polypeptide reads, in one-letter code: MARNIVVSGIRRPPTEDLPVELVERKGLGHPDYIADSISEYVSRELSKYYMENFGTILHHNVDKVLVIGGNAQVKFGGGEIIEPIRIIVSGRATTEVKSSTGVVKVPIGSIILSAARKFIIDNFRFLNPDQHLVIDYKVGQGSVDLVGVYELGVSSGGVPLANDTSIGVGFAPLTVTERLVYETERLLNSREFKARYPEVGEDVKVMGLRRGRKITLTVASALVSRLIKDKDHYISVKEDVVNAIYDNAVKLANGYEVEVHLNTADNPEHGIYYLTYTGTSAEHGDDGMTGRGNRANGLITPMRPMSMEATAGKNPVSHIGKIYYVLANMIAKRIHDEVKGTREVYVYLLSQIGKPIDNPLIANVEIITNEGEVTSEMKREAEAITDEEISRVTRLTSMFVKGEITPF.

140-145 (GQGSVD) is a binding site for ATP.

It belongs to the AdoMet synthase 2 family. It depends on Mg(2+) as a cofactor.

The enzyme catalyses L-methionine + ATP + H2O = S-adenosyl-L-methionine + phosphate + diphosphate. The protein operates within amino-acid biosynthesis; S-adenosyl-L-methionine biosynthesis; S-adenosyl-L-methionine from L-methionine: step 1/1. In terms of biological role, catalyzes the formation of S-adenosylmethionine from methionine and ATP. The chain is S-adenosylmethionine synthase from Caldivirga maquilingensis (strain ATCC 700844 / DSM 13496 / JCM 10307 / IC-167).